The chain runs to 331 residues: L-lactate dehydrogenase A chain (331 aa).

NAD(+)-binding positions include 29 to 57 (GMVG…MEDK) and arginine 98. Substrate-binding residues include arginine 105, asparagine 137, and arginine 168. Asparagine 137 is an NAD(+) binding site. The active-site Proton acceptor is the histidine 192. Threonine 247 is a substrate binding site.

Belongs to the LDH/MDH superfamily. LDH family. Homotetramer.

The protein localises to the cytoplasm. It catalyses the reaction (S)-lactate + NAD(+) = pyruvate + NADH + H(+). The protein operates within fermentation; pyruvate fermentation to lactate; (S)-lactate from pyruvate: step 1/1. Interconverts simultaneously and stereospecifically pyruvate and lactate with concomitant interconversion of NADH and NAD(+). This Notothenia neglecta (Yellowbelly rockcod) protein is L-lactate dehydrogenase A chain (ldha).